A 1415-amino-acid chain; its full sequence is MKINKIILFFFLSCLYLFSSSVSAQQLLGEIEITEKSFTIDASVINTKINYLIDNTITKPKLSVTSIFGEATSIDDILRISDDKKSLTFGDYTSSTLSSSNKLVSKINLNSLILISFSTIITFGLFTKNNPRSSSKPLLFIVLLICISIFNLSNSIKISEVSVRIDIKVPSTFKFDSLILTLGSGSSIINGLIASSLKIDGCTTNSKDHSIELNQISISSELNICSTKEININEIQLTSTNVKLNLTSSSNVNLDFHNGYSGSFSINTNDLTLDSACETFKDSNTGIIIGTCNGGSDNSKLSITAITGKTVVSNAEITCPIDNSWRVTVGADNVPPSPSIITSQPATDFIFKKNDLVYMAQYGYSNQSITDGPVENSFIVSYPAYIPPSNFLVSKIIGSPTFKANVKYQFSISVKLGQPLGSFNRIQNMSLYFFNPRDITDPINGASQYYELKDTIPLFVHTFEGNFTSNTEFALTKIEFTPTVDIGTSIFGLRIFRTGFTGGDVVTVIIKDMKFTILPKTITQPTLLIKDSELVNLPKPSTSFDPQDSSTCPYLANDLVHWHNPSTWPNGIIPSPSSNITLPEGKKVLISPCSISQTQVYKWIKVPSTSELIFADSPMDFHVKDIYVEGKFIMGTTKCRYNSKINIIFHGEKTLSDTISQYYGSKGIGVSSSGFISVHAKQYHNTWSKLSASAWSGDYVVYIQDNVNWEVGQKVVVITSYYQDEDNNQNEVMTIAAIQGKTIQFTEPLKFFHYGGQEYQAEIALLTRRITFQSSDVNQFGGHVMVMGEGQFAGLGLIGMGQRNIKARYPLHYHLGKVLKNSYISDCSVTNSYYRCYTIHGTNNVTLTRNVAFDVSGHCYYLEDGVEMDNTISFNLAAYVHPIGRPAAGPSQIGEVFVESDNLRQPADCAASGYYITNAWNKIIGNTASGGWAGYAFPNLDKPIGNHRTVQMIPKAYSTKVFEGNTGHSSGHFFITGATIYVGANLTYNEVDGLLYYDSGRFERFTYKNGTVVYGNEVPMRFNNTKIYLSNFGIGHWGEYVEVVSYESHDNIRSASIFGEAWLSKAIVNGNSNNIARSINFNKQGFQYYDTYVKTVLSNISFRNYIRNPKSLNDEDDNRAIISMTHGDVFKPQGISTARAISFVNVAKSQIVGHQVLPTSGSRYFNFIDWDSSITGKKPGQPALVGSHELWYKFDNTCEYNSDWTCHICEKGNKEIANIQFIIPGLIDDGVLVYDSFENLNVGNISLFGSGITERRSTIVTKNQGVTGVSNMGWYLYLKAGSPKYMKIWLSQVVYGQHIFLALPYPTQTTFIIKSNYIWGSAINYNHVFSLASSAADVRSGNGTKYYFDGNFLYVKLVNLVLTGDPSEYYERDGVKVYWVRNSFSVSIEATNTVTPPTSDGFFKNLPDNLPSSSL.

Residues 1–24 (MKINKIILFFFLSCLYLFSSSVSA) form the signal peptide. The next 2 helical transmembrane spans lie at 107–127 (INLN…GLFT) and 138–158 (LLFI…SIKI). N245, N366, N428, N466, and N579 each carry an N-linked (GlcNAc...) asparagine glycan. The region spanning 566 to 692 (STWPNGIIPS…YHNTWSKLSA (127 aa)) is the G8 domain. PbH1 repeat units follow at residues 819–841 (LKNS…TIHG) and 842–864 (TNNV…YLED). N844, N985, N1009, N1023, N1099, N1244, and N1342 each carry an N-linked (GlcNAc...) asparagine glycan.

Belongs to the comF family.

The protein localises to the membrane. This Dictyostelium discoideum (Social amoeba) protein is G8 domain-containing protein DDB_G0278975.